A 433-amino-acid chain; its full sequence is Alpha-(1-&gt;3)-arabinofuranosyltransferase (433 aa).

The next 10 membrane-spanning stretches (helical) occupy residues 118–138, 140–160, 164–184, 197–217, 224–244, 280–300, 310–330, 333–353, 356–376, and 385–405; these read LFIS…LRMF, FTLT…TETV, LVFT…LRWL, LAIG…LLPL, ALVA…PLVS, WLIL…LWLL, LFWF…VMSL, GYYS…NSVI, WPAW…LFNW, and YLKI…VLYF.

This sequence belongs to the glycosyltransferase 87 family.

It localises to the cell membrane. It carries out the reaction Adds an alpha-D-arabinofuranosyl group from trans,octacis-decaprenylphospho-beta-D-arabinofuranose at the 3-O-position of an alpha-(1-&gt;5)-arabinofuranan chain attached to a beta-(1-&gt;5)-galactofuranan chain.. The protein operates within cell wall biogenesis; cell wall polysaccharide biosynthesis. In terms of biological role, involved in the biosynthesis of the arabinogalactan (AG) region of the mycolylarabinogalactan-peptidoglycan (mAGP) complex, an essential component of the mycobacterial cell wall. Catalyzes the addition of an arabinofuranosyl (Araf) residue from the sugar donor beta-D-arabinofuranosyl-1-monophosphoryldecaprenol (DPA) on the C-3 of an alpha-(1-&gt;5)-linked Araf from the arabinan backbone of AG. The protein is Alpha-(1-&gt;3)-arabinofuranosyltransferase (aftC) of Mycobacterium tuberculosis (strain CDC 1551 / Oshkosh).